Here is a 314-residue protein sequence, read N- to C-terminus: tRNA-cytidine(32) 2-sulfurtransferase (314 aa).

The PP-loop motif signature appears at 39-44; the sequence is SGGKDS. [4Fe-4S] cluster contacts are provided by C114, C117, and C205.

This sequence belongs to the TtcA family. Homodimer. Requires Mg(2+) as cofactor. [4Fe-4S] cluster serves as cofactor.

Its subcellular location is the cytoplasm. The enzyme catalyses cytidine(32) in tRNA + S-sulfanyl-L-cysteinyl-[cysteine desulfurase] + AH2 + ATP = 2-thiocytidine(32) in tRNA + L-cysteinyl-[cysteine desulfurase] + A + AMP + diphosphate + H(+). Its pathway is tRNA modification. In terms of biological role, catalyzes the ATP-dependent 2-thiolation of cytidine in position 32 of tRNA, to form 2-thiocytidine (s(2)C32). The sulfur atoms are provided by the cysteine/cysteine desulfurase (IscS) system. The chain is tRNA-cytidine(32) 2-sulfurtransferase from Cupriavidus metallidurans (strain ATCC 43123 / DSM 2839 / NBRC 102507 / CH34) (Ralstonia metallidurans).